Consider the following 952-residue polypeptide: MASTTTSTSSLSSRRQKTGVGSFTINEQIGKGSFATVYRGTHMPSGNLVAIKSVNLSRLNKKLKDNLYVEIEILKSLYHPHIVALIDCRESASHIHLMMEYCELGDLSYFIKKRDRLADNPTLYDMVQKYPMPVEGGLNQVVVRHFFKQLSSAMEFLRERDFVHRDVKPQNLLLIPSPEWIAKRAKGGPEAMKASKESVVAMVGINSLPMLKLADFGFARSLPSTSLAETLCGSPLYMAPEILRYEKYDARADLWSIGTVLYEMMTGRPPFKAINHVQLLQKIEKNQDEIRFPSRGIYSRDLKDIVRRLLKKKPEDRITFPEYFAHPVVTEPIPGLVGDDRPKEKSPETSIVRQPSLRDRQRESPTVKHIDTAYESLITRDIGEQSPRTPNIESNQPFGTPGRSSGRPDSRDRPSPVSAATAPNVDTLPRQRDRKDRTEPNYAPIVRTGSTKQRYDEQANLQPKNEVQSSNSITEAEQDVRDAREYVLVEKKAVEVNAFADEMAANPRLGRANSAPKQLPRRHTSMGEPNSTTGAVAVPPSRIVQRASGRAQPDTSSARNSYGSYGKTGSSPSTASAIAKALQGASVRVFGVSWSPTLIGKGPSPPQLYNPYPAYPTPNAGLIGDGRPIDEDQRVVNIIEDSATRSDVVYGFAEVKYRQLIPLAPSMNHGLGGPNPERTGDAMDEDDGLTVEAIVNLSEEALVLYVKSLSLLSKSMDIAGAWWSRKQRGGIVSGGHTPGSDSSSAAQAGNRINGAVQWVRTRFNEVLEKAELVRLKLVEAQKRLPEDHPGHPNNRSTASRLVGGSSTTDGVVLSSGITAEKLMYDRALEMSRTAAINELANEDLPGCEISYTTAIRMLEAVLENDEELIPRKRSSSLREDKEKSEGGEVNGINFGDRKDVLKVLQMIRTRLQVLKKKMTAIAKHQSMPPPSSSPRRSYSGGTTPTINNTPPK.

The region spanning 23-329 is the Protein kinase domain; that stretch reads FTINEQIGKG…FPEYFAHPVV (307 aa). Residues 29–37 and Lys52 contribute to the ATP site; that span reads IGKGSFATV. Asp166 functions as the Proton acceptor in the catalytic mechanism. 4 disordered regions span residues 331–478, 510–573, 783–806, and 920–952; these read EPIP…EAEQ, GRAN…SSPS, RLPE…GGSS, and AIAK…TPPK. 2 stretches are compositionally biased toward basic and acidic residues: residues 338 to 347 and 356 to 372; these read GDDRPKEKSP and SLRD…HIDT. Positions 386–398 are enriched in polar residues; it reads SPRTPNIESNQPF. Basic and acidic residues predominate over residues 429–439; that stretch reads PRQRDRKDRTE. 3 stretches are compositionally biased toward polar residues: residues 459-475, 553-573, and 793-806; these read ANLQ…SITE, PDTS…SSPS, and NNRS…GGSS. Residues 933 to 952 are compositionally biased toward low complexity; sequence SPRRSYSGGTTPTINNTPPK.

The protein belongs to the protein kinase superfamily. Ser/Thr protein kinase family. APG1/unc-51/ULK1 subfamily. In terms of assembly, homodimer. Forms a ternary complex with ATG13 and ATG17.

It is found in the cytoplasm. The protein resides in the preautophagosomal structure membrane. It catalyses the reaction L-seryl-[protein] + ATP = O-phospho-L-seryl-[protein] + ADP + H(+). It carries out the reaction L-threonyl-[protein] + ATP = O-phospho-L-threonyl-[protein] + ADP + H(+). Its function is as follows. Serine/threonine protein kinase involved in the cytoplasm to vacuole transport (Cvt) and found to be essential in autophagy, where it is required for the formation of autophagosomes. Involved in the clearance of protein aggregates which cannot be efficiently cleared by the proteasome. Required for selective autophagic degradation of the nucleus (nucleophagy) as well as for mitophagy which contributes to regulate mitochondrial quantity and quality by eliminating the mitochondria to a basal level to fulfill cellular energy requirements and preventing excess ROS production. Also involved in endoplasmic reticulum-specific autophagic process, in selective removal of ER-associated degradation (ERAD) substrates. Plays a key role in ATG9 and ATG23 cycling through the pre-autophagosomal structure and is necessary to promote ATG18 binding to ATG9 through phosphorylation of ATG9. Catalyzes phosphorylation of ATG4, decreasing the interaction between ATG4 and ATG8 and impairing deconjugation of PE-conjugated forms of ATG8. This chain is Serine/threonine-protein kinase atg1, found in Botryotinia fuckeliana (strain B05.10) (Noble rot fungus).